Consider the following 119-residue polypeptide: Protein GSKIP homolog (119 aa).

The protein belongs to the GSKIP family.

The polypeptide is Protein GSKIP homolog (Drosophila melanogaster (Fruit fly)).